A 324-amino-acid polypeptide reads, in one-letter code: Phospho-N-acetylmuramoyl-pentapeptide-transferase (324 aa).

The next 10 helical transmembrane spans lie at 5 to 25 (GLLV…PLFI), 52 to 72 (PTMG…IMAI), 77 to 97 (LGAE…IGFL), 122 to 142 (VIAI…YIMI), 149 to 169 (FELG…GSNA), 176 to 196 (LDGL…IIAV), 201 to 221 (FGVA…LVFN), 227 to 247 (VFMG…VAIL), 253 to 273 (LLVI…IQVI), and 302 to 322 (VVVT…YIGV).

It belongs to the glycosyltransferase 4 family. MraY subfamily. The cofactor is Mg(2+).

Its subcellular location is the cell membrane. The catalysed reaction is UDP-N-acetyl-alpha-D-muramoyl-L-alanyl-gamma-D-glutamyl-meso-2,6-diaminopimeloyl-D-alanyl-D-alanine + di-trans,octa-cis-undecaprenyl phosphate = di-trans,octa-cis-undecaprenyl diphospho-N-acetyl-alpha-D-muramoyl-L-alanyl-D-glutamyl-meso-2,6-diaminopimeloyl-D-alanyl-D-alanine + UMP. It participates in cell wall biogenesis; peptidoglycan biosynthesis. Its function is as follows. Catalyzes the initial step of the lipid cycle reactions in the biosynthesis of the cell wall peptidoglycan: transfers peptidoglycan precursor phospho-MurNAc-pentapeptide from UDP-MurNAc-pentapeptide onto the lipid carrier undecaprenyl phosphate, yielding undecaprenyl-pyrophosphoryl-MurNAc-pentapeptide, known as lipid I. This Bacillus cereus (strain AH820) protein is Phospho-N-acetylmuramoyl-pentapeptide-transferase.